The following is a 234-amino-acid chain: MAGKKFAAVAKKVDSAKKYTVEEAFKLVVETAPAKFDESIDVALRLGIDPKQSDQQVRGAIALPHGLGKEVKVVVFAKGPKEAEAKAAGADFVGADDLVAKIQGGWLDFDKCIATPDMMATVSKVAKILGPRGLMPNPKIGTVTMNVGEAVTAEKKGKLDFRVDKAGIVHAGIGKKSMGDAKLKDNFMTLLGAIVKAKPASSKGIYLRSIAVASTMGPGVKIEPNAAAAATGAN.

The protein belongs to the universal ribosomal protein uL1 family. As to quaternary structure, part of the 50S ribosomal subunit.

Functionally, binds directly to 23S rRNA. The L1 stalk is quite mobile in the ribosome, and is involved in E site tRNA release. In terms of biological role, protein L1 is also a translational repressor protein, it controls the translation of the L11 operon by binding to its mRNA. The polypeptide is Large ribosomal subunit protein uL1 (Bdellovibrio bacteriovorus (strain ATCC 15356 / DSM 50701 / NCIMB 9529 / HD100)).